The following is a 241-amino-acid chain: Tumor necrosis factor receptor superfamily member 18 (241 aa).

A signal peptide spans 1 to 25; it reads MAQHGAMGAFRALCGLALLCALSLG. Residues 26 to 162 are Extracellular-facing; the sequence is QRPTGGPGCG…CVPGSPPAEP (137 aa). Cystine bridges form between cysteine 34-cysteine 49, cysteine 74-cysteine 86, cysteine 81-cysteine 94, cysteine 115-cysteine 134, and cysteine 128-cysteine 153. 3 TNFR-Cys repeats span residues 34–72, 74–112, and 115–153; these read CGPG…EWDC, CVQP…GFQC, and CASG…NAVC. Asparagine 146 carries an N-linked (GlcNAc...) asparagine glycan. A helical transmembrane segment spans residues 163 to 183; sequence LGWLTVVLLAVAACVLLLTSA. Residues 184–241 lie on the Cytoplasmic side of the membrane; that stretch reads QLGLHIWQLRSQCMWPRETQLLLEVPPSTEDARSCQFPEEERGERSAEEKGRLGDLWV. Positions 214 to 241 are disordered; sequence DARSCQFPEEERGERSAEEKGRLGDLWV. Residues 222 to 241 are compositionally biased toward basic and acidic residues; it reads EEERGERSAEEKGRLGDLWV.

Binds to TRAF1, TRAF2, and TRAF3, but not TRAF5 and TRAF6. Binds through its C-terminus to SIVA1/SIVA. In terms of tissue distribution, expressed in lymph node, peripheral blood leukocytes and weakly in spleen.

It localises to the cell membrane. Its subcellular location is the secreted. In terms of biological role, receptor for TNFSF18. Seems to be involved in interactions between activated T-lymphocytes and endothelial cells and in the regulation of T-cell receptor-mediated cell death. Mediated NF-kappa-B activation via the TRAF2/NIK pathway. The chain is Tumor necrosis factor receptor superfamily member 18 (TNFRSF18) from Homo sapiens (Human).